A 352-amino-acid chain; its full sequence is N-acetyl-gamma-glutamyl-phosphate reductase (352 aa).

The active site involves Cys-156.

This sequence belongs to the NAGSA dehydrogenase family. Type 1 subfamily.

It is found in the cytoplasm. It carries out the reaction N-acetyl-L-glutamate 5-semialdehyde + phosphate + NADP(+) = N-acetyl-L-glutamyl 5-phosphate + NADPH + H(+). It functions in the pathway amino-acid biosynthesis; L-arginine biosynthesis; N(2)-acetyl-L-ornithine from L-glutamate: step 3/4. Functionally, catalyzes the NADPH-dependent reduction of N-acetyl-5-glutamyl phosphate to yield N-acetyl-L-glutamate 5-semialdehyde. In Rhodospirillum rubrum (strain ATCC 11170 / ATH 1.1.1 / DSM 467 / LMG 4362 / NCIMB 8255 / S1), this protein is N-acetyl-gamma-glutamyl-phosphate reductase.